A 222-amino-acid polypeptide reads, in one-letter code: Large ribosomal subunit protein uL4 (222 aa).

It belongs to the universal ribosomal protein uL4 family. In terms of assembly, part of the 50S ribosomal subunit.

Functionally, one of the primary rRNA binding proteins, this protein initially binds near the 5'-end of the 23S rRNA. It is important during the early stages of 50S assembly. It makes multiple contacts with different domains of the 23S rRNA in the assembled 50S subunit and ribosome. Its function is as follows. Forms part of the polypeptide exit tunnel. This chain is Large ribosomal subunit protein uL4, found in Methylacidiphilum infernorum (isolate V4) (Methylokorus infernorum (strain V4)).